The sequence spans 435 residues: ATP-dependent Clp protease ATP-binding subunit ClpX 3 (435 aa).

The ClpX-type ZB domain occupies 1–53; the sequence is MSSDPPAKTQHCSFCGIEQGRDTPLIAGIEGQICEACVRLAEQVVANWGRKRS. Positions 12, 15, 34, and 37 each coordinate Zn(2+). 125–132 serves as a coordination point for ATP; that stretch reads PTGTGKTL.

This sequence belongs to the ClpX chaperone family. Component of the ClpX-ClpP complex. Forms a hexameric ring that, in the presence of ATP, binds to fourteen ClpP subunits assembled into a disk-like structure with a central cavity, resembling the structure of eukaryotic proteasomes.

ATP-dependent specificity component of the Clp protease. It directs the protease to specific substrates. Can perform chaperone functions in the absence of ClpP. This is ATP-dependent Clp protease ATP-binding subunit ClpX 3 from Methylococcus capsulatus (strain ATCC 33009 / NCIMB 11132 / Bath).